A 276-amino-acid chain; its full sequence is Large ribosomal subunit protein uL2 (276 aa).

Disordered regions lie at residues 14–58 (RNAS…GGGH) and 221–276 (TRGE…KNRK). A compositionally biased stretch (polar residues) spans 16–27 (ASVSDFSELTRS). Residues 255–276 (RRPKKASNKMIVRRRPSGKNRK) show a composition bias toward basic residues.

The protein belongs to the universal ribosomal protein uL2 family. As to quaternary structure, part of the 50S ribosomal subunit. Forms a bridge to the 30S subunit in the 70S ribosome.

One of the primary rRNA binding proteins. Required for association of the 30S and 50S subunits to form the 70S ribosome, for tRNA binding and peptide bond formation. It has been suggested to have peptidyltransferase activity; this is somewhat controversial. Makes several contacts with the 16S rRNA in the 70S ribosome. The chain is Large ribosomal subunit protein uL2 from Bifidobacterium longum subsp. infantis (strain ATCC 15697 / DSM 20088 / JCM 1222 / NCTC 11817 / S12).